A 305-amino-acid polypeptide reads, in one-letter code: Homoserine kinase (305 aa).

Position 95–105 (95–105) interacts with ATP; it reads PHGRGLGSSSA.

It belongs to the GHMP kinase family. Homoserine kinase subfamily.

The protein localises to the cytoplasm. It carries out the reaction L-homoserine + ATP = O-phospho-L-homoserine + ADP + H(+). It participates in amino-acid biosynthesis; L-threonine biosynthesis; L-threonine from L-aspartate: step 4/5. Functionally, catalyzes the ATP-dependent phosphorylation of L-homoserine to L-homoserine phosphate. The sequence is that of Homoserine kinase from Streptomyces avermitilis (strain ATCC 31267 / DSM 46492 / JCM 5070 / NBRC 14893 / NCIMB 12804 / NRRL 8165 / MA-4680).